A 467-amino-acid chain; its full sequence is Pentatricopeptide repeat-containing protein At1g77170, mitochondrial (467 aa).

A mitochondrion-targeting transit peptide spans 1 to 30 (MFFSGLISKLHVHGTKRTNHFTIFHRLNHF). 9 PPR repeats span residues 81-115 (IAFL…TVLP), 116-150 (DRYS…GFVG), 151-181 (DEFC…NPER), 182-216 (KLGS…GLEP), 217-251 (DDFT…KTEE), 254-284 (DIMM…MRQR), 285-319 (NVVS…GVRP), 320-350 (NKIT…MKSE), and 356-386 (GLSH…MPMK). Residues 391–466 (VWGCLMGGCE…IPAYSYASTT (76 aa)) form a type E motif region.

It belongs to the PPR family. PCMP-E subfamily.

It localises to the mitochondrion. The polypeptide is Pentatricopeptide repeat-containing protein At1g77170, mitochondrial (PCMP-E21) (Arabidopsis thaliana (Mouse-ear cress)).